The following is a 41-amino-acid chain: Large ribosomal subunit protein bL36 (41 aa).

The protein belongs to the bacterial ribosomal protein bL36 family.

The protein is Large ribosomal subunit protein bL36 of Jannaschia sp. (strain CCS1).